A 130-amino-acid polypeptide reads, in one-letter code: Small ribosomal subunit protein uS8 (130 aa).

This sequence belongs to the universal ribosomal protein uS8 family. In terms of assembly, part of the 30S ribosomal subunit.

Functionally, one of the primary rRNA binding proteins, it binds directly to 16S rRNA central domain where it helps coordinate assembly of the platform of the 30S subunit. This is Small ribosomal subunit protein uS8 from Methanococcus voltae.